The primary structure comprises 170 residues: Neurotensin/neuromedin N (170 aa).

An N-terminal signal peptide occupies residues 1–23 (MMAGMKIQLVCMLLLAFSSWSLC). At Q151 the chain carries Pyrrolidone carboxylic acid.

This sequence belongs to the neurotensin family. As to quaternary structure, interacts with NTSR1. Interacts with SORT1. Interacts with SORL1. Neurotensin is cleaved and degraded by Angiotensin-converting enzyme (ACE) and neprilysin (MME).

The protein resides in the secreted. Its subcellular location is the cytoplasmic vesicle. The protein localises to the secretory vesicle. Neurotensin may play an endocrine or paracrine role in the regulation of fat metabolism. It causes contraction of smooth muscle. This chain is Neurotensin/neuromedin N (NTS), found in Homo sapiens (Human).